Here is a 354-residue protein sequence, read N- to C-terminus: Myosin-binding protein H-like (354 aa).

The interval 1–47 (MEAATAPEVAAGSKLKVKEASPADAEPPQASPGQGAGSPTPQLLPPI) is disordered. At serine 38 the chain carries Phosphoserine. The Ig-like C2-type 1 domain maps to 45–139 (PPIEEHPKIW…GGLEATATID (95 aa)). One can recognise a Fibronectin type-III domain in the interval 148-238 (PPQSIKLVDV…ETAPITTDLA (91 aa)). The region spanning 261–345 (PKFTQPLADC…VNPLGEASVD (85 aa)) is the Ig-like C2-type 2 domain. Cysteines 282 and 333 form a disulfide. Arginine 321 is subject to Omega-N-methylarginine.

It belongs to the immunoglobulin superfamily. MyBP family. As to expression, expressed in heart, with higher expression in the atria. Expressed in left atrium and ventricle, arteria mammaria interna and skeletal muscle. In terms of tissue distribution, expressed specifically en the left atrium.

It localises to the cytoplasm. It is found in the myofibril. The protein localises to the sarcomere. Myosin-binding protein which plays a role in cardiac function. Seems to regulate conduction in the atria and ventricular conduction systems. In Homo sapiens (Human), this protein is Myosin-binding protein H-like.